Here is a 423-residue protein sequence, read N- to C-terminus: Imidazolonepropionase (423 aa).

Fe(3+)-binding residues include His78 and His80. Residues His78 and His80 each contribute to the Zn(2+) site. 4-imidazolone-5-propanoate-binding residues include Arg87, Tyr150, and His183. Tyr150 is an N-formimidoyl-L-glutamate binding site. Fe(3+) is bound at residue His247. Residue His247 coordinates Zn(2+). Glu250 contributes to the 4-imidazolone-5-propanoate binding site. Residue Asp322 coordinates Fe(3+). Asp322 contributes to the Zn(2+) binding site. N-formimidoyl-L-glutamate-binding residues include Asn324 and Gly326. Position 327 (Ser327) interacts with 4-imidazolone-5-propanoate.

It belongs to the metallo-dependent hydrolases superfamily. HutI family. The cofactor is Zn(2+). Requires Fe(3+) as cofactor.

The protein localises to the cytoplasm. The catalysed reaction is 4-imidazolone-5-propanoate + H2O = N-formimidoyl-L-glutamate. It participates in amino-acid degradation; L-histidine degradation into L-glutamate; N-formimidoyl-L-glutamate from L-histidine: step 3/3. Catalyzes the hydrolytic cleavage of the carbon-nitrogen bond in imidazolone-5-propanoate to yield N-formimidoyl-L-glutamate. It is the third step in the universal histidine degradation pathway. In Bacillus cytotoxicus (strain DSM 22905 / CIP 110041 / 391-98 / NVH 391-98), this protein is Imidazolonepropionase.